Consider the following 429-residue polypeptide: uncharacterized protein (429 aa).

This is an uncharacterized protein from Mycobacterium tuberculosis (strain CDC 1551 / Oshkosh).